Here is a 361-residue protein sequence, read N- to C-terminus: Peptide chain release factor 1 (361 aa).

Glutamine 237 is modified (N5-methylglutamine). Over residues 287 to 297 (KQQKEQSDTRK) the composition is skewed to basic and acidic residues. Residues 287 to 313 (KQQKEQSDTRKSLVGSGDRSERIRTYN) are disordered.

This sequence belongs to the prokaryotic/mitochondrial release factor family. In terms of processing, methylated by PrmC. Methylation increases the termination efficiency of RF1.

The protein localises to the cytoplasm. Peptide chain release factor 1 directs the termination of translation in response to the peptide chain termination codons UAG and UAA. This is Peptide chain release factor 1 from Francisella tularensis subsp. holarctica (strain FTNF002-00 / FTA).